The primary structure comprises 408 residues: NADH-quinone oxidoreductase subunit D (408 aa).

This sequence belongs to the complex I 49 kDa subunit family. In terms of assembly, NDH-1 is composed of 14 different subunits. Subunits NuoB, C, D, E, F, and G constitute the peripheral sector of the complex.

It is found in the cell inner membrane. The enzyme catalyses a quinone + NADH + 5 H(+)(in) = a quinol + NAD(+) + 4 H(+)(out). In terms of biological role, NDH-1 shuttles electrons from NADH, via FMN and iron-sulfur (Fe-S) centers, to quinones in the respiratory chain. The immediate electron acceptor for the enzyme in this species is believed to be ubiquinone. Couples the redox reaction to proton translocation (for every two electrons transferred, four hydrogen ions are translocated across the cytoplasmic membrane), and thus conserves the redox energy in a proton gradient. This Campylobacter jejuni subsp. doylei (strain ATCC BAA-1458 / RM4099 / 269.97) protein is NADH-quinone oxidoreductase subunit D.